A 120-amino-acid chain; its full sequence is Large ribosomal subunit protein bL19 (120 aa).

The protein belongs to the bacterial ribosomal protein bL19 family.

Its function is as follows. This protein is located at the 30S-50S ribosomal subunit interface and may play a role in the structure and function of the aminoacyl-tRNA binding site. In Picosynechococcus sp. (strain ATCC 27264 / PCC 7002 / PR-6) (Agmenellum quadruplicatum), this protein is Large ribosomal subunit protein bL19.